We begin with the raw amino-acid sequence, 286 residues long: Pyridoxal kinase PdxY (286 aa).

Residues Ser-9 and 44 to 45 each bind substrate; that span reads TQ. ATP is bound by residues Asp-111, Glu-148, and Lys-181. Residue Asp-222 participates in substrate binding.

It belongs to the pyridoxine kinase family. PdxY subfamily. Homodimer. Requires Mg(2+) as cofactor.

The catalysed reaction is pyridoxal + ATP = pyridoxal 5'-phosphate + ADP + H(+). Its pathway is cofactor metabolism; pyridoxal 5'-phosphate salvage; pyridoxal 5'-phosphate from pyridoxal: step 1/1. Pyridoxal kinase involved in the salvage pathway of pyridoxal 5'-phosphate (PLP). Catalyzes the phosphorylation of pyridoxal to PLP. This Actinobacillus succinogenes (strain ATCC 55618 / DSM 22257 / CCUG 43843 / 130Z) protein is Pyridoxal kinase PdxY.